A 908-amino-acid polypeptide reads, in one-letter code: MDSAALEKMTGAKFPAVQGVIEEFSRDRVQNVLGDMRSRQVIKYAVGLSEASVQELRFNWPCFTWEEESVPLPPHPFAAYSRRAFTRWAIAQCGPVPIKDFGGNWFLHWQWQTGVHSCCPLLNPRDGAHQTRRELNMESYLRTHGPKYDKFNELSRPDLCHHRAEDCSVRAKAALSVDSAYDMGLKNTCKAMHRAGIELLHGNILFDPDMLIEAKMEGFVAGMNYHWKKTRRSTGLMSSFLEMGSSLFGVSNSSKEGEGHHDLKIKMGSSSTHMVPADWEISYHFRDDCVLGYTHNLADVLSIATGSYVKVGNTFYELERTGLKSGMLMYTITACKGLYDRASARSTPLSAKASTVIINGMSYQVGEKLDPISFPYLAASFYMQAQKAVFEVQQVVDLHTPNRNLWSWFKKKFELKAHAFLFALGLRDSHDEWLLDQIEFELNETVCTLPGEFLEPVSEVERLDAALEDWRRDRERLNGKSVENLKTLTVLVELAKKLGISAYEVLNSHQNESERPKDQWHVEAALFEAVELERAHWKMLTAEAQAMSLQDPLSREAKSKGWSYESSDSLPCAYAYVFSEGRFVKPADLKKKTRVLVSPSMQIMNQIRMAESLEKAIAMNVKSCKKTWIDGVAGCGKTYEIVHTADIFKKDDLILTANKKSQEDIFSQLKPGTDCAKRIRTVDSYLLKPDVQAKRLFIDEAGLVHPGKLLAAMRFAECDDCLLFGDSEQIPFVNIVESLQPAKFLKLEVDAREVRETTYRCPADVTATLATLYKKKKIVTKSKVLKSVTSKSLASASAVSGLDPHSWHLTMYQADKAELVRVARTNQMDDVWIKEHIKTVHEAQGISVPHVKLYRFKTFDQPLFDAAHAEAYRLVAISRHTQSFTYIGVNQHLCKADRMLKFVICQIP.

A methyltransferase region spans residues G47–R341. An Alphavirus-like MT domain is found at E66–A304. Residues P599 to R755 form the (+)RNA virus helicase ATP-binding domain. An ATP-dependent helicase region spans residues I629–I887. In terms of domain architecture, (+)RNA virus helicase C-terminal spans E756–P908.

It belongs to the bromoviridae replication protein 1a family. Interacts with RNA-directed RNA polymerase 2a.

The protein localises to the host endoplasmic reticulum membrane. Its function is as follows. Involved in the virus replication. Contains a helicase domain and a methyltransferase domain. The methyltransferase domain is probably involved in viral RNA capping. Involved in the formation of ER membrane spherular invaginations in which RNA replication complexes form. This Olea (OLV-2) protein is Replication protein 1a.